A 602-amino-acid polypeptide reads, in one-letter code: Probable translation initiation factor IF-2 (602 aa).

One can recognise a tr-type G domain in the interval 15–230; sequence LRTPIVAVLG…VLMGLSQRYL (216 aa). Residues 24–31 form a G1 region; the sequence is GHVDHGKT. 24 to 31 contacts GTP; sequence GHVDHGKT. The G2 stretch occupies residues 49-53; sequence AITQH. The interval 86 to 89 is G3; the sequence is DTPG. Residues 86–90 and 140–143 contribute to the GTP site; these read DTPGH and NKID. Residues 140 to 143 form a G4 region; that stretch reads NKID. Residues 208 to 210 are G5; the sequence is SAE.

The protein belongs to the TRAFAC class translation factor GTPase superfamily. Classic translation factor GTPase family. IF-2 subfamily.

Its function is as follows. Function in general translation initiation by promoting the binding of the formylmethionine-tRNA to ribosomes. Seems to function along with eIF-2. This chain is Probable translation initiation factor IF-2, found in Natronomonas pharaonis (strain ATCC 35678 / DSM 2160 / CIP 103997 / JCM 8858 / NBRC 14720 / NCIMB 2260 / Gabara) (Halobacterium pharaonis).